The following is a 22-amino-acid chain: SEKITVFQKGNFQVTEXSSHFV.

This sequence belongs to the AB hydrolase superfamily. Lipase family.

The enzyme catalyses a chlorophyll + H2O = a chlorophyllide + phytol + H(+). It participates in porphyrin-containing compound metabolism; chlorophyll degradation. Catalyzes the hydrolysis of ester bond in chlorophyll to yield chlorophyllide and phytol. The polypeptide is Chlorophyllase type 1 (Chenopodium album (Fat hen)).